Reading from the N-terminus, the 298-residue chain is Dihydrodipicolinate reductase-like protein CRR1, chloroplastic (298 aa).

Residues 1–25 (MAAVNCHFFQLSRHLKPSRPSFSCS) constitute a chloroplast transit peptide. NAD(+) is bound at residue 160–163 (APTL).

It belongs to the DapB family. As to expression, expressed specifically in leaves.

The protein resides in the plastid. It localises to the chloroplast stroma. Its function is as follows. Dihydrodipicolinate reductase (DHPR)-like protein that may not function as DHPR in lysine biosynthesis. Required for both formation and activity of the chloroplast NAD(P)H dehydrogenase (NDH) complex of the photosynthetic electron transport chain. May function in assembly or stabilization of the NDH complex. The polypeptide is Dihydrodipicolinate reductase-like protein CRR1, chloroplastic (Arabidopsis thaliana (Mouse-ear cress)).